A 117-amino-acid chain; its full sequence is Acylphosphatase (117 aa).

Residues arginine 21–proline 107 enclose the Acylphosphatase-like domain. Active-site residues include arginine 36 and asparagine 54.

This sequence belongs to the acylphosphatase family.

The catalysed reaction is an acyl phosphate + H2O = a carboxylate + phosphate + H(+). This is Acylphosphatase (acyP) from Synechococcus sp. (strain RCC307).